A 375-amino-acid polypeptide reads, in one-letter code: MTIMSDIIAQRTILLIADFSSIIGCSLVLIGFWRLKLLRNHITKIISLFCATSLFKDVISTIITLLYKPDQTESGFPCYLHAIVITFGSLACWLWTLMLSFSIYNLIVRREPEPERFEKFYFCLCYGLPLISTIVMLSTHIIQPVGGWCWIGDNYDGYRFGLFYGPFFFIWGTSAILVGLTSKYTYSVIRSSVSDNKDKHMTYQFKLINYIVVFLVCWVFAIVNRILNGLNQFPTVPNVLHTYFSVSHGFYASITFIYNNPLMWRYFGAKFLLIFSKFGLFVQAQQRLELNKNNNNPSPIMRSKNALDNGADSSVVELPCLSKADSLSLDAENNIETPKENENQNHHHHHHHHHHHNHYNNNNNNNNINNKNDMI.

Residues 1–10 lie on the Extracellular side of the membrane; the sequence is MTIMSDIIAQ. A helical transmembrane segment spans residues 11–30; sequence RTILLIADFSSIIGCSLVLI. The Cytoplasmic portion of the chain corresponds to 31-44; it reads GFWRLKLLRNHITK. Residues 45–65 traverse the membrane as a helical segment; it reads IISLFCATSLFKDVISTIITL. The Extracellular segment spans residues 66-82; it reads LYKPDQTESGFPCYLHA. Residues 83–108 traverse the membrane as a helical segment; it reads IVITFGSLACWLWTLMLSFSIYNLIV. Topologically, residues 109–119 are cytoplasmic; sequence RREPEPERFEK. A helical transmembrane segment spans residues 120-138; sequence FYFCLCYGLPLISTIVMLS. The Extracellular segment spans residues 139–161; the sequence is THIIQPVGGWCWIGDNYDGYRFG. The helical transmembrane segment at 162 to 180 threads the bilayer; that stretch reads LFYGPFFFIWGTSAILVGL. Residues 181–204 are Cytoplasmic-facing; that stretch reads TSKYTYSVIRSSVSDNKDKHMTYQ. The residue at position 192 (Ser-192) is a Phosphoserine. A helical transmembrane segment spans residues 205–223; it reads FKLINYIVVFLVCWVFAIV. Over 224–234 the chain is Extracellular; it reads NRILNGLNQFP. A helical membrane pass occupies residues 235–259; the sequence is TVPNVLHTYFSVSHGFYASITFIYN. Topologically, residues 260–375 are cytoplasmic; it reads NPLMWRYFGA…NNINNKNDMI (116 aa). 2 positions are modified to phosphoserine: Ser-298 and Ser-303. The interval 338-375 is disordered; sequence PKENENQNHHHHHHHHHHHNHYNNNNNNNNINNKNDMI. Residues 346–358 are compositionally biased toward basic residues; it reads HHHHHHHHHHHNH. Residues 359 to 375 are compositionally biased toward low complexity; it reads YNNNNNNNNINNKNDMI.

Belongs to the G-protein coupled receptor 5 family. C-terminal Ser or Thr residues may be phosphorylated.

The protein localises to the membrane. Its function is as follows. Receptor for cAMP. Coordinates the aggregation of individual cells into a multicellular organism and regulates the expression of a large number of developmentally regulated genes. The activity of this receptor is mediated by G proteins. Plays a key role during tip formation and late development; involved in cAMP-directed patterning of pre stalk cells as they sort before and during tip formation. The protein is Cyclic AMP receptor 2 (carB) of Dictyostelium discoideum (Social amoeba).